The primary structure comprises 612 residues: Elongation factor 4 (612 aa).

The tr-type G domain maps to 11-193 (KHIRNFSIVA…EIVKKVPAPD (183 aa)). Residues 23-28 (DHGKST) and 140-143 (NKID) contribute to the GTP site.

The protein belongs to the TRAFAC class translation factor GTPase superfamily. Classic translation factor GTPase family. LepA subfamily.

It localises to the cell membrane. It carries out the reaction GTP + H2O = GDP + phosphate + H(+). In terms of biological role, required for accurate and efficient protein synthesis under certain stress conditions. May act as a fidelity factor of the translation reaction, by catalyzing a one-codon backward translocation of tRNAs on improperly translocated ribosomes. Back-translocation proceeds from a post-translocation (POST) complex to a pre-translocation (PRE) complex, thus giving elongation factor G a second chance to translocate the tRNAs correctly. Binds to ribosomes in a GTP-dependent manner. This chain is Elongation factor 4, found in Lactobacillus johnsonii (strain CNCM I-12250 / La1 / NCC 533).